Reading from the N-terminus, the 454-residue chain is Protein IQ-DOMAIN 1 (454 aa).

The calmodulin-binding stretch occupies residues 103-113 (GKSKEEAAAIL). The IQ domain maps to 107–136 (EEAAAILIQSTFRGHLARRESQVMRGQERL). The interval 272 to 454 (WESSEKEQNT…KGVLKAERTP (183 aa)) is disordered. The span at 280–328 (NTTNNDNSSVKNSTNRNSQGGETAKSSNRNKLNSSTKPNTPSASSTATR) shows a compositional bias: polar residues. The segment covering 343 to 356 (KSSDDEAKSSERNR) has biased composition (basic and acidic residues). The span at 371–388 (LSSSTARRSSNLIPTTKS) shows a compositional bias: polar residues. Positions 397-412 (TSSRVAVTTSTTEESS) are enriched in low complexity. Residues 421-428 (KKRLSTSA) carry the Nuclear localization signal motif. A compositionally biased stretch (basic and acidic residues) spans 442 to 454 (KVEKGVLKAERTP).

Belongs to the IQD family. As to quaternary structure, binds to multiple calmodulin (CaM) in the presence of Ca(2+)(e.g. CaM1 and CaM2) and CaM-like (e.g. CML8 and CML9) proteins. Interacts with KLCR1. Expressed in roots, flowers, stems, siliques, inflorescence stems and whole shoots. Restricted to the vascular bundles.

The protein resides in the nucleus. The protein localises to the nucleolus. It localises to the cytoplasm. Its subcellular location is the cytoskeleton. Functionally, may be involved in cooperative interactions with calmodulins or calmodulin-like proteins. Modulates expression of glucosinolate pathway genes. May associate with nucleic acids and regulate gene expression at the transcriptional or post-transcriptional level. Recruits KLCR1 and calmodulin proteins to microtubules, thus being a potential scaffold in cellular signaling and trafficking. The protein is Protein IQ-DOMAIN 1 of Arabidopsis thaliana (Mouse-ear cress).